Consider the following 433-residue polypeptide: uncharacterized protein (433 aa).

The first 28 residues, methionine 1–glycine 28, serve as a signal peptide directing secretion. The Extracellular segment spans residues phenylalanine 29–glycine 274. Polar residues predominate over residues glycine 235–serine 250. A disordered region spans residues glycine 235–alanine 266. The segment covering asparagine 251–alanine 266 has biased composition (basic and acidic residues). Residues valine 275 to leucine 295 form a helical membrane-spanning segment. Residues leucine 296 to glycine 433 lie on the Cytoplasmic side of the membrane. 2 disordered regions span residues glutamate 320–aspartate 340 and lysine 413–glycine 433.

In terms of tissue distribution, component of the acid-insoluble and acid-soluble organic matrix of the aragonitic skeleton (at protein level).

It is found in the membrane. This is an uncharacterized protein from Acropora millepora (Staghorn coral).